Consider the following 543-residue polypeptide: Biotinidase (543 aa).

An N-terminal signal peptide occupies residues 1 to 41 (MAHAHIQGGRRAKSRFVVCIMSGARSKLALFLCGCYVVALG). In terms of domain architecture, CN hydrolase spans 72-351 (NPLALISRQE…VGLIGAENAT (280 aa)). Residue E112 is the Proton acceptor of the active site. N119 is a glycosylation site (N-linked (GlcNAc...) asparagine). N150 is a glycosylation site (N-linked (GlcNAc...) (complex) asparagine). The N-linked (GlcNAc...) asparagine glycan is linked to N203. Residue K212 is the Proton donor of the active site. C245 acts as the Nucleophile in catalysis. Residues N349, N402, and N489 are each glycosylated (N-linked (GlcNAc...) asparagine).

It belongs to the carbon-nitrogen hydrolase superfamily. BTD/VNN family.

It is found in the secreted. It localises to the extracellular space. It catalyses the reaction biocytin + H2O = biotin + L-lysine. It carries out the reaction biotin amide + H2O = biotin + NH4(+). Catalytic release of biotin from biocytin, the product of biotin-dependent carboxylases degradation. This is Biotinidase from Homo sapiens (Human).